Reading from the N-terminus, the 100-residue chain is A-type ATP synthase subunit F (100 aa).

It belongs to the V-ATPase F subunit family. As to quaternary structure, has multiple subunits with at least A(3), B(3), C, D, E, F, H, I and proteolipid K(x).

It is found in the cell membrane. Its function is as follows. Component of the A-type ATP synthase that produces ATP from ADP in the presence of a proton gradient across the membrane. This chain is A-type ATP synthase subunit F, found in Methanoregula boonei (strain DSM 21154 / JCM 14090 / 6A8).